A 964-amino-acid polypeptide reads, in one-letter code: Syndetin (964 aa).

N-acetylmethionine is present on Met1. The segment at Met1–Ala25 is disordered. Ser15 is modified (phosphoserine). Coiled coils occupy residues Leu81–Leu107 and Tyr216–Ile244. Residues Ser494, Ser498, Ser559, and Ser561 each carry the phosphoserine modification. The disordered stretch occupies residues Asp532–Val563. Residue Lys963 forms a Glycyl lysine isopeptide (Lys-Gly) (interchain with G-Cter in SUMO1); alternate linkage. A Glycyl lysine isopeptide (Lys-Gly) (interchain with G-Cter in SUMO2); alternate cross-link involves residue Lys963.

Belongs to the syndetin family. As to quaternary structure, component of the endosome-associated retrograde protein (EARP) complex, composed of VPS51, VPS52, VPS53 and VPS50/Syndetin. The EARP complex interacts with EIPR1. Interacts with VPS51 and VPS53 in an EIPR1-independent manner.

It localises to the recycling endosome. Its subcellular location is the membrane. Its function is as follows. Acts as a component of the EARP complex that is involved in endocytic recycling. The EARP complex associates with Rab4-positive endosomes and promotes recycling of internalized transferrin receptor (TFRC) to the plasma membrane. Within the EARP complex, required to tether the complex to recycling endosomes. Not involved in retrograde transport from early and late endosomes to the trans-Golgi network (TGN). The protein is Syndetin of Mus musculus (Mouse).